We begin with the raw amino-acid sequence, 189 residues long: Probable nicotinate-nucleotide adenylyltransferase (189 aa).

Belongs to the NadD family.

It catalyses the reaction nicotinate beta-D-ribonucleotide + ATP + H(+) = deamido-NAD(+) + diphosphate. The protein operates within cofactor biosynthesis; NAD(+) biosynthesis; deamido-NAD(+) from nicotinate D-ribonucleotide: step 1/1. Functionally, catalyzes the reversible adenylation of nicotinate mononucleotide (NaMN) to nicotinic acid adenine dinucleotide (NaAD). The sequence is that of Probable nicotinate-nucleotide adenylyltransferase from Bacillus cereus (strain G9842).